A 354-amino-acid polypeptide reads, in one-letter code: UDP-N-acetylglucosamine--N-acetylmuramyl-(pentapeptide) pyrophosphoryl-undecaprenol N-acetylglucosamine transferase 3 (354 aa).

UDP-N-acetyl-alpha-D-glucosamine is bound by residues 12-14, Arg-163, Ser-193, and Gln-287; that span reads TAG.

The protein belongs to the glycosyltransferase 28 family. MurG subfamily.

It localises to the cell membrane. It catalyses the reaction di-trans,octa-cis-undecaprenyl diphospho-N-acetyl-alpha-D-muramoyl-L-alanyl-D-glutamyl-meso-2,6-diaminopimeloyl-D-alanyl-D-alanine + UDP-N-acetyl-alpha-D-glucosamine = di-trans,octa-cis-undecaprenyl diphospho-[N-acetyl-alpha-D-glucosaminyl-(1-&gt;4)]-N-acetyl-alpha-D-muramoyl-L-alanyl-D-glutamyl-meso-2,6-diaminopimeloyl-D-alanyl-D-alanine + UDP + H(+). It functions in the pathway cell wall biogenesis; peptidoglycan biosynthesis. In terms of biological role, cell wall formation. Catalyzes the transfer of a GlcNAc subunit on undecaprenyl-pyrophosphoryl-MurNAc-pentapeptide (lipid intermediate I) to form undecaprenyl-pyrophosphoryl-MurNAc-(pentapeptide)GlcNAc (lipid intermediate II). This Bacillus cereus (strain ATCC 14579 / DSM 31 / CCUG 7414 / JCM 2152 / NBRC 15305 / NCIMB 9373 / NCTC 2599 / NRRL B-3711) protein is UDP-N-acetylglucosamine--N-acetylmuramyl-(pentapeptide) pyrophosphoryl-undecaprenol N-acetylglucosamine transferase 3.